A 457-amino-acid polypeptide reads, in one-letter code: Secreted RxLR effector protein 8 (457 aa).

Residues 1-19 (MRGTLATALLLVISSRVAT) form the signal peptide. Positions 48–69 (RFLRGSRKQRDDLAPTAADENR) match the RxLR-dEER motif. An N-linked (GlcNAc...) asparagine glycan is attached at Asn-68. 2 disordered regions span residues 110-188 (RLSL…ALKS) and 398-457 (RQTI…RSSS). Low complexity predominate over residues 135 to 152 (SASTSTTSDIATSSSRTS). Composition is skewed to polar residues over residues 153–163 (NQRTPKTQASL) and 176–187 (SKNQFKKSTALK). Residues 442–457 (IKSKDHARKKRPRSSS) are compositionally biased toward basic residues.

The protein belongs to the RxLR effector family.

It localises to the secreted. It is found in the host nucleus. In terms of biological role, secreted effector that completely suppresses the host cell death induced by cell death-inducing proteins. The protein is Secreted RxLR effector protein 8 of Plasmopara viticola (Downy mildew of grapevine).